The chain runs to 649 residues: Echinoderm microtubule-associated protein-like 2 (649 aa).

Residues 10–649 (KEVIFSMEEG…DTSVLQWRVA (640 aa)) are tandem atypical propeller in EMLs. WD repeat units lie at residues 56-93 (KLDW…LYSV), 97-144 (RQRH…VWDS), 151-192 (HVLG…VWDW), 195-234 (ESKV…FWSL), 241-280 (KRQG…VWGK), 285-323 (ITQE…LWGS), 369-406 (FSLL…LWSS), 410-447 (QPVW…LLDT), 452-489 (LVAI…VYTV), 495-535 (KVSR…YWDA), 564-602 (FGIW…LFSY), and 609-648 (ALSH…QWRV).

It belongs to the WD repeat EMAP family. As to quaternary structure, interacts with GRID2 and may also interact with GRID1. Interacts with EML3. Binds unpolymerized tubulins via its WD repeat region. In terms of tissue distribution, widely expressed in both brain and peripheral tissues, including brainstem and enrichment in the postsynaptic density, PSD.

Its subcellular location is the cytoplasm. It localises to the cytoskeleton. The protein resides in the spindle. Functionally, tubulin binding protein that inhibits microtubule nucleation and growth, resulting in shorter microtubules. The polypeptide is Echinoderm microtubule-associated protein-like 2 (Eml2) (Rattus norvegicus (Rat)).